Reading from the N-terminus, the 206-residue chain is MIIAIDGPAASGKGTLGKRIAGHLGLAHLDTGLLYRAVGAACLAAGKLDDEAASVEAARTLDVTTLDPESLRTGAIGEAASVVAARPGVRAALVDLQRRFAARPEGAVLDGRDIGSVICPDATVKLFVTASPEVRAERRFKELAARDPLASYEAVLADIHKRDERDSNRAAAPLVMASDAVLLDTSHLGIEESFAAALAIVERARG.

Residue 7-15 participates in ATP binding; sequence GPAASGKGT.

It belongs to the cytidylate kinase family. Type 1 subfamily.

It localises to the cytoplasm. It carries out the reaction CMP + ATP = CDP + ADP. It catalyses the reaction dCMP + ATP = dCDP + ADP. This is Cytidylate kinase from Azorhizobium caulinodans (strain ATCC 43989 / DSM 5975 / JCM 20966 / LMG 6465 / NBRC 14845 / NCIMB 13405 / ORS 571).